The sequence spans 372 residues: Putative F-box/kelch-repeat protein At3g22730 (372 aa).

An F-box domain is found at 1-50; it reads MMMSDLSLDLVEEILSRVPATSLKRLRSTCKLWNALFKNPGFTKKQFLKA. Kelch repeat units lie at residues 155-204, 245-293, and 324-372; these read ILRC…SFKG, ALSV…PIRG, and KVYI…IIKE.

The polypeptide is Putative F-box/kelch-repeat protein At3g22730 (Arabidopsis thaliana (Mouse-ear cress)).